The sequence spans 416 residues: Serine protease hepsin (416 aa).

Residues 1–18 (MAKEGGRTAPCCSRPKVA) are Cytoplasmic-facing. The chain crosses the membrane as a helical; Signal-anchor for type II membrane protein span at residues 19–39 (ALTVGTLLFLTGIGAASWAIV). At 40-416 (TILLRSDQEP…SEATGMVTQP (377 aa)) the chain is on the extracellular side. The SRCR domain maps to 53–150 (VQLSPGDSRL…RGRFLTATCQ (98 aa)). Intrachain disulfides connect Cys76/Cys139, Cys89/Cys149, Cys118/Cys137, Cys152/Cys276, Cys187/Cys203, Cys290/Cys358, Cys321/Cys337, and Cys348/Cys380. A glycan (N-linked (GlcNAc...) asparagine) is linked at Asn111. In terms of domain architecture, Peptidase S1 spans 162-404 (IVGGQDSSLG…FREWIFQAIK (243 aa)). Catalysis depends on charge relay system residues His202 and Asp256. Ser352 acts as the Charge relay system in catalysis.

It belongs to the peptidase S1 family. As to expression, widely expressed. Present in brain, heart, kidney, liver, stomach, muscle, lung, testis, skin and eye. Not expressed in ovary and thynus. In inner ear tissues, expressed in stria vascularis, modiolus, organ of Corti and spiral ganglion.

The protein resides in the cell membrane. It localises to the apical cell membrane. It catalyses the reaction Cleavage after basic amino-acid residues, with Arg strongly preferred to Lys.. Serine protease that cleaves extracellular substrates, and contributes to the proteolytic processing of growth factors, such as HGF and MST1/HGFL. Plays a role in cell growth and maintenance of cell morphology. Plays a role in the proteolytic processing of ACE2. Mediates the proteolytic cleavage of urinary UMOD that is required for UMOD polymerization. This is Serine protease hepsin (Hpn) from Rattus norvegicus (Rat).